Here is a 474-residue protein sequence, read N- to C-terminus: NAD(P) transhydrogenase subunit beta (474 aa).

The next 9 helical transmembrane spans lie at 4 to 24, 46 to 66, 83 to 103, 132 to 152, 181 to 200, 202 to 222, 229 to 249, 253 to 273, and 321 to 341; these read GLVQ…LAGL, IATI…AMII, MPEL…LVGF, VLTN…AVTF, LAAL…NPES, FPVL…VASI, VVVS…GFIL, LLIV…YIMC, and VIIT…VADI.

It belongs to the PNT beta subunit family. As to quaternary structure, heterodimer of an alpha and a beta chain.

The protein localises to the cell inner membrane. The enzyme catalyses NAD(+) + NADPH + H(+)(in) = NADH + NADP(+) + H(+)(out). Functionally, the transhydrogenation between NADH and NADP is coupled to respiration and ATP hydrolysis and functions as a proton pump across the membrane. This is NAD(P) transhydrogenase subunit beta (pntB) from Haemophilus influenzae (strain ATCC 51907 / DSM 11121 / KW20 / Rd).